The chain runs to 396 residues: S-adenosylmethionine synthase (396 aa).

Residue H16 participates in ATP binding. Residue D18 coordinates Mg(2+). E44 serves as a coordination point for K(+). L-methionine-binding residues include E57 and Q100. Residues 100-110 (QSVDINQGVDR) are flexible loop. Residues 165–167 (DAK), D240, 246–247 (RK), A263, and K267 each bind ATP. L-methionine is bound at residue D240. An L-methionine-binding site is contributed by K271.

It belongs to the AdoMet synthase family. Homotetramer; dimer of dimers. Mg(2+) serves as cofactor. It depends on K(+) as a cofactor.

The protein localises to the cytoplasm. The catalysed reaction is L-methionine + ATP + H2O = S-adenosyl-L-methionine + phosphate + diphosphate. Its pathway is amino-acid biosynthesis; S-adenosyl-L-methionine biosynthesis; S-adenosyl-L-methionine from L-methionine: step 1/1. In terms of biological role, catalyzes the formation of S-adenosylmethionine (AdoMet) from methionine and ATP. The overall synthetic reaction is composed of two sequential steps, AdoMet formation and the subsequent tripolyphosphate hydrolysis which occurs prior to release of AdoMet from the enzyme. This Pseudomonas aeruginosa (strain UCBPP-PA14) protein is S-adenosylmethionine synthase.